Consider the following 246-residue polypeptide: Trypsin-5 (246 aa).

A signal peptide spans 1–15; sequence MNSLLFLALVGAAVA. A propeptide spans 16–23 (activation peptide); sequence FPVDDDDK. The region spanning 24–244 is the Peptidase S1 domain; it reads IVGGYTCREN…YVDWIQDTIA (221 aa). The cysteines at positions 48 and 64 are disulfide-linked. Residues histidine 63 and aspartate 107 each act as charge relay system in the active site. Intrachain disulfides connect cysteine 139–cysteine 206, cysteine 171–cysteine 185, and cysteine 196–cysteine 220. Serine 200 (charge relay system) is an active-site residue.

The protein belongs to the peptidase S1 family. In terms of processing, proteolytically cleaved and activated by an autocatalytic mechanism. Cleavage by CTRC inhibits autoactivation. As to expression, expressed in the heart, lung, brain, kidney, liver, epididymis, ovary and uterus. Expression in the testis is limited to round and elongating spermatids.

It localises to the cytoplasmic vesicle. The protein resides in the secretory vesicle. The protein localises to the acrosome. The catalysed reaction is Preferential cleavage: Arg-|-Xaa, Lys-|-Xaa.. With respect to regulation, activated by autocatalytic cleavage. Cleavage by CTRC inhibits autoactivation. In terms of biological role, serine protease capable of autoactivation. The protein is Trypsin-5 of Mus musculus (Mouse).